A 285-amino-acid chain; its full sequence is NAD kinase (285 aa).

D66 functions as the Proton acceptor in the catalytic mechanism. NAD(+)-binding positions include 66-67 (DG), 137-138 (ND), R148, R165, D167, and 178-183 (TAYSMS).

It belongs to the NAD kinase family. Requires a divalent metal cation as cofactor.

The protein localises to the cytoplasm. The catalysed reaction is NAD(+) + ATP = ADP + NADP(+) + H(+). Its function is as follows. Involved in the regulation of the intracellular balance of NAD and NADP, and is a key enzyme in the biosynthesis of NADP. Catalyzes specifically the phosphorylation on 2'-hydroxyl of the adenosine moiety of NAD to yield NADP. The chain is NAD kinase from Chlorobium phaeobacteroides (strain DSM 266 / SMG 266 / 2430).